The following is a 513-amino-acid chain: Putative ribose/galactose/methyl galactoside import ATP-binding protein 2 (513 aa).

2 consecutive ABC transporter domains span residues 24-260 (LSAE…VGRE) and 270-510 (VPIG…VMEL). 56-63 (GENGAGKS) contributes to the ATP binding site.

Belongs to the ABC transporter superfamily. Carbohydrate importer 2 (CUT2) (TC 3.A.1.2) family.

It is found in the cell inner membrane. It carries out the reaction D-ribose(out) + ATP + H2O = D-ribose(in) + ADP + phosphate + H(+). It catalyses the reaction D-galactose(out) + ATP + H2O = D-galactose(in) + ADP + phosphate + H(+). Part of an ABC transporter complex involved in carbohydrate import. Could be involved in ribose, galactose and/or methyl galactoside import. Responsible for energy coupling to the transport system. In Rhizobium etli (strain ATCC 51251 / DSM 11541 / JCM 21823 / NBRC 15573 / CFN 42), this protein is Putative ribose/galactose/methyl galactoside import ATP-binding protein 2.